Here is a 500-residue protein sequence, read N- to C-terminus: Glycerol kinase (500 aa).

Thr16 serves as a coordination point for ADP. Positions 16 and 17 each coordinate ATP. A sn-glycerol 3-phosphate-binding site is contributed by Thr16. Arg20 lines the ADP pocket. Positions 86, 87, 138, and 247 each coordinate sn-glycerol 3-phosphate. Glycerol is bound by residues Arg86, Glu87, Tyr138, Asp247, and Gln248. ADP is bound by residues Thr269 and Gly312. Residues Thr269, Gly312, Gln316, and Gly413 each contribute to the ATP site. The ADP site is built by Gly413 and Asn417.

This sequence belongs to the FGGY kinase family.

It carries out the reaction glycerol + ATP = sn-glycerol 3-phosphate + ADP + H(+). It participates in polyol metabolism; glycerol degradation via glycerol kinase pathway; sn-glycerol 3-phosphate from glycerol: step 1/1. Inhibited by fructose 1,6-bisphosphate (FBP). Functionally, key enzyme in the regulation of glycerol uptake and metabolism. Catalyzes the phosphorylation of glycerol to yield sn-glycerol 3-phosphate. The sequence is that of Glycerol kinase from Rippkaea orientalis (strain PCC 8801 / RF-1) (Cyanothece sp. (strain PCC 8801)).